Reading from the N-terminus, the 472-residue chain is Gamma-aminobutyric acid receptor subunit beta-2 (472 aa).

The first 23 residues, 1–23 (RVRKKDYFGIWSFPLIIAAVCAQ), serve as a signal peptide directing secretion. Residues 24–239 (SVNDPSNMSL…LSLSFKLKRN (216 aa)) lie on the Extracellular side of the membrane. N-linked (GlcNAc...) asparagine glycans are attached at residues N30 and N102. Y119 provides a ligand contact to histamine. A disulfide bridge connects residues C158 and C172. Residues 178–179 (SY) and T224 contribute to the histamine site. Y179 and T224 together coordinate 4-aminobutanoate. The next 3 membrane-spanning stretches (helical) occupy residues 240-260 (IGYFILQTYMPSILITILSWV), 271-290 (ARVALGITTVLTMTTINTHL), and 309-329 (GCFVFVFMALLEYALVNYIFF). Residues 287 to 308 (NTHLRETLPKIPYVKAIDMYLM) form an etomidate binding; allosteric effector region. Over 330 to 450 (GRGPQRQKKA…LTDVNAIDRW (121 aa)) the chain is Cytoplasmic. Y401 is subject to Phosphotyrosine. A helical transmembrane segment spans residues 451–471 (SRIFFPVVFSFFNIVYWLYYV).

Belongs to the ligand-gated ion channel (TC 1.A.9) family. Gamma-aminobutyric acid receptor (TC 1.A.9.5) subfamily. GABRB2 sub-subfamily. Heteropentamer, formed by a combination of alpha (GABRA1-6), beta (GABRB1-3), gamma (GABRG1-3), delta (GABRD), epsilon (GABRE), rho (GABRR1-3), pi (GABRP) and theta (GABRQ) chains, each subunit exhibiting distinct physiological and pharmacological properties. Interacts with UBQLN1. May interact with KIF21B. Identified in a complex of 720 kDa composed of LHFPL4, NLGN2, GABRA1, GABRB2, GABRG2 and GABRB3. Glycosylated.

The protein resides in the postsynaptic cell membrane. The protein localises to the cell membrane. It is found in the cytoplasmic vesicle membrane. It catalyses the reaction chloride(in) = chloride(out). With respect to regulation, allosterically activated by benzodiazepines. Allosterically activated by the anesthetic etomidate. Inhibited by the antagonist bicuculline. Potentiated by histamine. Functionally, beta subunit of the heteropentameric ligand-gated chloride channel gated by gamma-aminobutyric acid (GABA), a major inhibitory neurotransmitter in the brain. GABA-gated chloride channels, also named GABA(A) receptors (GABAAR), consist of five subunits arranged around a central pore and contain GABA active binding site(s) located at the alpha and beta subunit interface(s). When activated by GABA, GABAARs selectively allow the flow of chloride anions across the cell membrane down their electrochemical gradient. Chloride influx into the postsynaptic neuron following GABAAR opening decreases the neuron ability to generate a new action potential, thereby reducing nerve transmission. GABAARs containing alpha-1 and beta-2 or -3 subunits exhibit synaptogenic activity; the gamma-2 subunit being necessary but not sufficient to induce rapid synaptic contacts formation. Extrasynaptic beta-2 receptors contribute to the tonic GABAergic inhibition. Beta-containing GABAARs can simultaneously bind GABA and histamine where histamine binds at the interface of two neighboring beta subunits, which may be involved in the regulation of sleep and wakefulness. The protein is Gamma-aminobutyric acid receptor subunit beta-2 (GABRB2) of Bos taurus (Bovine).